An 842-amino-acid chain; its full sequence is Translation initiation factor IF-2 (842 aa).

The disordered stretch occupies residues Thr121–Val144. The tr-type G domain maps to Pro340–Lys510. Residues Gly349 to Thr356 are G1. Residue Gly349 to Thr356 coordinates GTP. Residues Gly374 to His378 are G2. A G3 region spans residues Asp396 to Gly399. GTP-binding positions include Asp396–His400 and Asn450–Asp453. The interval Asn450–Asp453 is G4. The interval Ser486 to Lys488 is G5.

The protein belongs to the TRAFAC class translation factor GTPase superfamily. Classic translation factor GTPase family. IF-2 subfamily.

It is found in the cytoplasm. Its function is as follows. One of the essential components for the initiation of protein synthesis. Protects formylmethionyl-tRNA from spontaneous hydrolysis and promotes its binding to the 30S ribosomal subunits. Also involved in the hydrolysis of GTP during the formation of the 70S ribosomal complex. This is Translation initiation factor IF-2 from Ehrlichia chaffeensis (strain ATCC CRL-10679 / Arkansas).